Here is a 36-residue protein sequence, read N- to C-terminus: Insecticidal toxin LaIT1 (36 aa).

Intrachain disulfides connect Cys-11/Cys-23 and Cys-17/Cys-29.

In terms of tissue distribution, expressed by the venom gland.

It localises to the secreted. In terms of biological role, affects the activity of both ryanodine-sensitive calcium-release channels RyR1 and RyR2 with high potency. At lower concentrations the toxin increases full openings of the RyRs, and at higher concentrations it inhibits full openings and induce openings to subconductance levels and reduces the number of full conductance openings. The different actions may be attributed to the toxins binding at different sites on the RyRs, with binding at a high-affinity site mediating the increase in full openings and the induction of subconductance states evoked upon binding to a lower-affinity site. Shows insect lethality against crickets and common cutworms (only shows paralysis against cockroaches), but no toxicity is observed in mice. In Liocheles australasiae (Dwarf wood scorpion), this protein is Insecticidal toxin LaIT1.